Reading from the N-terminus, the 288-residue chain is Acetyl-coenzyme A carboxylase carboxyl transferase subunit beta (288 aa).

The CoA carboxyltransferase N-terminal domain maps to 32–288 (LFAKCPACKH…LELHTEVENV (257 aa)). Zn(2+) contacts are provided by Cys36, Cys39, Cys54, and Cys57. The segment at 36 to 57 (CPACKHTIYQKDLGKNKVCPNC) adopts a C4-type zinc-finger fold.

Belongs to the AccD/PCCB family. In terms of assembly, acetyl-CoA carboxylase is a heterohexamer composed of biotin carboxyl carrier protein (AccB), biotin carboxylase (AccC) and two subunits each of ACCase subunit alpha (AccA) and ACCase subunit beta (AccD). Requires Zn(2+) as cofactor.

It localises to the cytoplasm. The enzyme catalyses N(6)-carboxybiotinyl-L-lysyl-[protein] + acetyl-CoA = N(6)-biotinyl-L-lysyl-[protein] + malonyl-CoA. Its pathway is lipid metabolism; malonyl-CoA biosynthesis; malonyl-CoA from acetyl-CoA: step 1/1. Component of the acetyl coenzyme A carboxylase (ACC) complex. Biotin carboxylase (BC) catalyzes the carboxylation of biotin on its carrier protein (BCCP) and then the CO(2) group is transferred by the transcarboxylase to acetyl-CoA to form malonyl-CoA. The chain is Acetyl-coenzyme A carboxylase carboxyl transferase subunit beta from Lactococcus lactis subsp. cremoris (strain MG1363).